The sequence spans 3431 residues: KICSTOR complex protein SZT2 (3431 aa).

Disordered regions lie at residues 699–731 (SKEP…PQQA), 1067–1101 (LRDP…TLPS), and 1162–1231 (KPKL…GADG). The tract at residues 1082–1188 (VAKDRAGNST…ATGTKATESQ (107 aa)) is mediates interaction with the GATOR1 complex. 2 stretches are compositionally biased toward polar residues: residues 1088-1101 (GNST…TLPS) and 1182-1212 (TKAT…TPSC). Serine 1275 is modified (phosphoserine). Positions 1356–1378 (PPSPGPLSPGPFSSSIEEGPEPR) are disordered. Residue serine 1415 is modified to Phosphoserine. 7 disordered regions span residues 1512–1534 (YRES…SDAD), 1629–1678 (PPAS…HPGL), 1806–1883 (RAED…PGET), 2113–2148 (PPSL…SDAV), 2450–2512 (TEAG…LEEG), 2735–2756 (ASPP…GGPL), and 2866–2899 (ETCA…DVPP). Phosphothreonine is present on threonine 1640. Polar residues predominate over residues 1641–1657 (SESSASFPRSPGQPSSL). Phosphoserine is present on serine 1650. Positions 1832 to 1854 (PLISLPSLSQGGSQPGPSRGLSL) are enriched in low complexity. Positions 2118–2129 (LSRSQEPISSED) are enriched in polar residues. Positions 2460–2473 (TTDDIVLDRPEDTR) are enriched in basic and acidic residues. Residues 2739-2749 (LSREQGRLSGS) show a composition bias toward low complexity.

Part of the KICSTOR complex composed of KPTN, ITFG2, KICS2 and SZT2. SZT2 probably serves as a link between the other three proteins in the KICSTOR complex and may mediate the direct interaction with the GATOR complex via GATOR1. The KICSTOR complex interacts directly with the GATOR1 complex and most probably indirectly with the GATOR2 complex in an amino acid-independent manner. As to expression, mostly expressed in brain, spinal cord and lung.

Its subcellular location is the lysosome membrane. It localises to the peroxisome. In terms of biological role, as part of the KICSTOR complex functions in the amino acid-sensing branch of the TORC1 signaling pathway. Recruits, in an amino acid-independent manner, the GATOR1 complex to the lysosomal membranes and allows its interaction with GATOR2 and the RAG GTPases. Functions upstream of the RAG GTPases and is required to negatively regulate mTORC1 signaling in absence of amino acids. In absence of the KICSTOR complex mTORC1 is constitutively localized to the lysosome and activated. The KICSTOR complex is also probably involved in the regulation of mTORC1 by glucose. May play a role in the cellular response to oxidative stress. The chain is KICSTOR complex protein SZT2 from Mus musculus (Mouse).